We begin with the raw amino-acid sequence, 282 residues long: Epoxide hydrolase LasB (282 aa).

Residues 1-133 (MPAETVRKEV…TDSSWTARPA (133 aa)) are lsd19A. Residue Tyr14 participates in substrate binding. Catalysis depends on Asp38, which acts as the Proton acceptor; for 5-exo epoxide-opening cyclization activity. Residues Glu65 and His146 each coordinate substrate. Residues 134-282 (PDEERRKELA…TDVSLLDPAA (149 aa)) form a lsd19B region. Catalysis depends on Asp170, which acts as the Proton acceptor; for 6-endo epoxide-opening cyclization activity. Substrate is bound by residues Arg177, Glu197, and Tyr251.

Its function is as follows. Epoxide hydrolase responsible for the double epoxide-opening cyclization of bisepoxyprelasalocid A to form lasalocid A, a polyether antibiotic. In vitro, accepts various substrate analogs differing in the left segment of lasalocid and epoxide stereochemistry to afford products with excellent regioselectivity. In Streptomyces lasalocidi (Streptomyces lasaliensis), this protein is Epoxide hydrolase LasB (lsd19).